A 194-amino-acid chain; its full sequence is Imidazoleglycerol-phosphate dehydratase (194 aa).

It belongs to the imidazoleglycerol-phosphate dehydratase family.

The protein localises to the cytoplasm. It catalyses the reaction D-erythro-1-(imidazol-4-yl)glycerol 3-phosphate = 3-(imidazol-4-yl)-2-oxopropyl phosphate + H2O. It functions in the pathway amino-acid biosynthesis; L-histidine biosynthesis; L-histidine from 5-phospho-alpha-D-ribose 1-diphosphate: step 6/9. The protein is Imidazoleglycerol-phosphate dehydratase of Oceanobacillus iheyensis (strain DSM 14371 / CIP 107618 / JCM 11309 / KCTC 3954 / HTE831).